A 284-amino-acid polypeptide reads, in one-letter code: Bifunctional protein FolD (284 aa).

NADP(+) contacts are provided by residues 166-168 (GAS), Ser-191, and Ile-232.

This sequence belongs to the tetrahydrofolate dehydrogenase/cyclohydrolase family. As to quaternary structure, homodimer.

It carries out the reaction (6R)-5,10-methylene-5,6,7,8-tetrahydrofolate + NADP(+) = (6R)-5,10-methenyltetrahydrofolate + NADPH. The enzyme catalyses (6R)-5,10-methenyltetrahydrofolate + H2O = (6R)-10-formyltetrahydrofolate + H(+). The protein operates within one-carbon metabolism; tetrahydrofolate interconversion. Its function is as follows. Catalyzes the oxidation of 5,10-methylenetetrahydrofolate to 5,10-methenyltetrahydrofolate and then the hydrolysis of 5,10-methenyltetrahydrofolate to 10-formyltetrahydrofolate. The chain is Bifunctional protein FolD from Thiobacillus denitrificans (strain ATCC 25259 / T1).